The chain runs to 283 residues: Thymidylate synthase (283 aa).

Arg-22 serves as a coordination point for dUMP. The Nucleophile role is filled by Cys-160. Residues 180–183, Asn-191, and 221–223 contribute to the dUMP site; these read RSCD and HIY. Asp-183 contacts (6R)-5,10-methylene-5,6,7,8-tetrahydrofolate. Ser-282 is a (6R)-5,10-methylene-5,6,7,8-tetrahydrofolate binding site.

It belongs to the thymidylate synthase family. Bacterial-type ThyA subfamily. Homodimer.

It localises to the cytoplasm. It catalyses the reaction dUMP + (6R)-5,10-methylene-5,6,7,8-tetrahydrofolate = 7,8-dihydrofolate + dTMP. Its pathway is pyrimidine metabolism; dTTP biosynthesis. Its function is as follows. Catalyzes the reductive methylation of 2'-deoxyuridine-5'-monophosphate (dUMP) to 2'-deoxythymidine-5'-monophosphate (dTMP) while utilizing 5,10-methylenetetrahydrofolate (mTHF) as the methyl donor and reductant in the reaction, yielding dihydrofolate (DHF) as a by-product. This enzymatic reaction provides an intracellular de novo source of dTMP, an essential precursor for DNA biosynthesis. In Shewanella pealeana (strain ATCC 700345 / ANG-SQ1), this protein is Thymidylate synthase.